The primary structure comprises 202 residues: Mitochondrial import receptor subunit TOM20-3 (202 aa).

The residue at position 1 (Met-1) is an N-acetylmethionine. The Cytoplasmic portion of the chain corresponds to 1-174 (MDTETEFDRI…NKKSSDAKYD (174 aa)). 2 TPR repeats span residues 38-74 (GGVL…DPKK) and 86-119 (TSFA…QPDN). Residues 146–166 (SQPMGRVEAPAPPSSKAVKNK) form a disordered region. Residues 175–192 (AMGWVILAIGVVAWISFA) traverse the membrane as a helical segment. Residues 193 to 202 (KANVPVSPPR) are Mitochondrial intermembrane-facing.

The protein belongs to the Tom20 family. As to quaternary structure, forms part of the preprotein translocase complex of the outer mitochondrial membrane (TOM complex) which consists of at least 6 different proteins (TOM5, TOM6, TOM7, TOM20, TOM22/TOM9 and TOM40). Component of a mitochondrial large protein complex that contains, at least, MIC60, DGS1, TOM40, TOM20 proteins, and petC/RISP. Post-translationally, the N-terminus is blocked. Expressed in roots, flowers, young cotyledons and leaves.

The protein localises to the mitochondrion outer membrane. Functionally, central component of the receptor complex responsible for the recognition and translocation of cytosolically synthesized mitochondrial preproteins. Together with TOM22 functions as the transit peptide receptor at the surface of the mitochondrion outer membrane and facilitates the movement of preproteins into the translocation pore. This chain is Mitochondrial import receptor subunit TOM20-3, found in Arabidopsis thaliana (Mouse-ear cress).